Here is a 307-residue protein sequence, read N- to C-terminus: tRNA pseudouridine synthase B (307 aa).

D41 functions as the Nucleophile in the catalytic mechanism.

This sequence belongs to the pseudouridine synthase TruB family. Type 1 subfamily.

The enzyme catalyses uridine(55) in tRNA = pseudouridine(55) in tRNA. In terms of biological role, responsible for synthesis of pseudouridine from uracil-55 in the psi GC loop of transfer RNAs. The chain is tRNA pseudouridine synthase B from Prochlorococcus marinus (strain AS9601).